The following is a 604-amino-acid chain: MKPKLVFLPFLIFITVFIEESEAVHPVVLETKLGDIRGNEFFFLSKKIRTFFGVPFAEPPVEEFRFRKPREKKQWKKLFDATKPANACFQTRDNYNTSFWGSEMWNANTQISEDCLYLNIWAPADAYNLTVMVWFFGGGFYSGSPSLSIYDGRALAATQHVIVVNINYRLGPFGFLYLDHPDAPGNMGLLDQQLALHWIRQNIVSFGGNPDKVSVFGQSAGAASIVAHLIAPGSRGLFKNAILQSGSLENTWAINSPFRAKQKSEKLLELVGCNKTTVENSMSCLRLVSPEQLSLSTWNISLTYLEFPFVIVSRDKHFFGHLDARAALREGDFNRDVNLMIGMNKDEGNYWNIYQLPQFFDKAEPPELTRHQFDNLIDSTFSIQPDIIRSAAKYIYSDPNCTDHGRKTRFYAGQMNQIVGDYFFSCDSLWLADQFFLFLQICSTPNGSLKNPPKVFVYYFTQSSSANPWPKWTGAMHGYEIEYVFGVPLSYSKIYKRREQIFSRKIMQFWASFAKNGTPRLRVLKNSEHWPEFNEHNNYRWMQLRSGSNIRPIKRRKETECQFWRRVKDTEYTAYLTQEYSSSCHINSYRILLFIPFFFIFSAF.

Positions 1 to 23 (MKPKLVFLPFLIFITVFIEESEA) are cleaved as a signal peptide. An intrachain disulfide couples cysteine 88 to cysteine 115. Asparagine 96 and asparagine 128 each carry an N-linked (GlcNAc...) asparagine glycan. The active-site Acyl-ester intermediate is serine 219. An intrachain disulfide couples cysteine 273 to cysteine 284. N-linked (GlcNAc...) asparagine glycans are attached at residues asparagine 274 and asparagine 299. The active-site Charge relay system is the glutamate 347. Residues asparagine 400 and asparagine 446 are each glycosylated (N-linked (GlcNAc...) asparagine). Cysteine 426 and cysteine 561 are joined by a disulfide. Residue histidine 477 is the Charge relay system of the active site.

It belongs to the type-B carboxylesterase/lipase family.

It is found in the synapse. The protein localises to the secreted. Its subcellular location is the cell membrane. The enzyme catalyses acetylcholine + H2O = choline + acetate + H(+). Its function is as follows. Rapidly hydrolyzes choline released into the synapse. The polypeptide is Acetylcholinesterase 4 (ace-4) (Caenorhabditis briggsae).